The sequence spans 125 residues: Ribonuclease P protein component (125 aa).

Belongs to the RnpA family. Consists of a catalytic RNA component (M1 or rnpB) and a protein subunit.

It carries out the reaction Endonucleolytic cleavage of RNA, removing 5'-extranucleotides from tRNA precursor.. RNaseP catalyzes the removal of the 5'-leader sequence from pre-tRNA to produce the mature 5'-terminus. It can also cleave other RNA substrates such as 4.5S RNA. The protein component plays an auxiliary but essential role in vivo by binding to the 5'-leader sequence and broadening the substrate specificity of the ribozyme. The chain is Ribonuclease P protein component from Clostridium perfringens (strain ATCC 13124 / DSM 756 / JCM 1290 / NCIMB 6125 / NCTC 8237 / Type A).